Consider the following 876-residue polypeptide: DNA double-strand break repair Rad50 ATPase (876 aa).

Residues R11, 31-37 (NGAGKTT), and Q139 each bind ATP. 2 coiled-coil regions span residues 188-528 (RERV…EDRL) and 575-710 (SGVE…RKER). Positions 387 to 484 (EETLQSEYEE…RLESVRRELE (98 aa)) constitute a Zinc-hook domain. Positions 432 and 435 each coordinate Zn(2+).

It belongs to the SMC family. RAD50 subfamily. In terms of assembly, homodimer. Forms a heterotetramer composed of two Mre11 subunits and two Rad50 subunits. Zn(2+) serves as cofactor.

Its function is as follows. Part of the Rad50/Mre11 complex, which is involved in the early steps of DNA double-strand break (DSB) repair. The complex may facilitate opening of the processed DNA ends to aid in the recruitment of HerA and NurA. Rad50 controls the balance between DNA end bridging and DNA resection via ATP-dependent structural rearrangements of the Rad50/Mre11 complex. In Methanopyrus kandleri (strain AV19 / DSM 6324 / JCM 9639 / NBRC 100938), this protein is DNA double-strand break repair Rad50 ATPase.